The chain runs to 111 residues: Phosphoribosyl-ATP pyrophosphatase (111 aa).

Belongs to the PRA-PH family.

Its subcellular location is the cytoplasm. The catalysed reaction is 1-(5-phospho-beta-D-ribosyl)-ATP + H2O = 1-(5-phospho-beta-D-ribosyl)-5'-AMP + diphosphate + H(+). It functions in the pathway amino-acid biosynthesis; L-histidine biosynthesis; L-histidine from 5-phospho-alpha-D-ribose 1-diphosphate: step 2/9. The polypeptide is Phosphoribosyl-ATP pyrophosphatase (Pseudomonas putida (strain ATCC 700007 / DSM 6899 / JCM 31910 / BCRC 17059 / LMG 24140 / F1)).